A 115-amino-acid polypeptide reads, in one-letter code: Large ribosomal subunit protein bL19 (115 aa).

Belongs to the bacterial ribosomal protein bL19 family.

Functionally, this protein is located at the 30S-50S ribosomal subunit interface and may play a role in the structure and function of the aminoacyl-tRNA binding site. This Streptococcus uberis (strain ATCC BAA-854 / 0140J) protein is Large ribosomal subunit protein bL19.